Reading from the N-terminus, the 334-residue chain is Phospholipase A1 2 (334 aa).

The N-terminal stretch at 1–23 (MMNLKYLLFFCLVQALHYCYAYG) is a signal peptide. Positions 24-33 (DPSLSNELDR) are excised as a propeptide. A disulfide bond links cysteine 37 and cysteine 120. The Nucleophile role is filled by serine 170. Residue aspartate 198 is the Charge relay system of the active site. 2 disulfides stabilise this stretch: cysteine 209–cysteine 214 and cysteine 252–cysteine 261. Residue histidine 263 is the Charge relay system of the active site. Cystine bridges form between cysteine 278–cysteine 302, cysteine 279–cysteine 327, and cysteine 295–cysteine 300.

It belongs to the AB hydrolase superfamily. Lipase family. Post-translationally, not glycosylated. Expressed by the venom gland.

Its subcellular location is the secreted. It catalyses the reaction a 1,2-diacyl-sn-glycero-3-phosphocholine + H2O = a 2-acyl-sn-glycero-3-phosphocholine + a fatty acid + H(+). Its function is as follows. Catalyzes the hydrolysis of phosphatidylcholine with phospholipase A1 activity (6.3 U/ml). May act as an allergen and induce hemolytic activity. This Vespa affinis (Lesser banded hornet) protein is Phospholipase A1 2.